The sequence spans 277 residues: MEMO1 family protein MTH_45 (277 aa).

This sequence belongs to the MEMO1 family.

The protein is MEMO1 family protein MTH_45 of Methanothermobacter thermautotrophicus (strain ATCC 29096 / DSM 1053 / JCM 10044 / NBRC 100330 / Delta H) (Methanobacterium thermoautotrophicum).